The sequence spans 250 residues: Thiamine thiazole synthase (250 aa).

Residues serine 36, 55–56 (EE), glycine 63, valine 126, and 152–154 (HVD) contribute to the NAD(+) site. Residues aspartate 154 and histidine 169 each coordinate Fe cation. Methionine 216 is an NAD(+) binding site. Residue arginine 226 coordinates glycine.

This sequence belongs to the THI4 family. In terms of assembly, homooctamer; tetramer of dimers. Requires Fe(2+) as cofactor.

The catalysed reaction is hydrogen sulfide + glycine + NAD(+) = ADP-5-ethyl-4-methylthiazole-2-carboxylate + nicotinamide + 3 H2O + H(+). The protein operates within cofactor biosynthesis; thiamine diphosphate biosynthesis. In terms of biological role, involved in the biosynthesis of the thiazole moiety of thiamine. Catalyzes the conversion of NAD and glycine to adenosine diphosphate 5-(2-hydroxyethyl)-4-methylthiazole-2-carboxylate (ADT), an adenylated thiazole intermediate, using free sulfide as a source of sulfur. The protein is Thiamine thiazole synthase of Thermotoga maritima (strain ATCC 43589 / DSM 3109 / JCM 10099 / NBRC 100826 / MSB8).